An 85-amino-acid polypeptide reads, in one-letter code: Large ribosomal subunit protein bL27 (85 aa).

Belongs to the bacterial ribosomal protein bL27 family.

The chain is Large ribosomal subunit protein bL27 from Leptospira biflexa serovar Patoc (strain Patoc 1 / Ames).